We begin with the raw amino-acid sequence, 403 residues long: Tyrosine--tRNA ligase (403 aa).

Positions 42–51 (PTAPDLHLGH) match the 'HIGH' region motif. Positions 226 to 230 (KMSKS) match the 'KMSKS' region motif. Lys229 provides a ligand contact to ATP. The region spanning 339–400 (LRLAGLLTAA…GKRNFARVSL (62 aa)) is the S4 RNA-binding domain.

Belongs to the class-I aminoacyl-tRNA synthetase family. TyrS type 2 subfamily. Homodimer.

The protein localises to the cytoplasm. It catalyses the reaction tRNA(Tyr) + L-tyrosine + ATP = L-tyrosyl-tRNA(Tyr) + AMP + diphosphate + H(+). Catalyzes the attachment of tyrosine to tRNA(Tyr) in a two-step reaction: tyrosine is first activated by ATP to form Tyr-AMP and then transferred to the acceptor end of tRNA(Tyr). This chain is Tyrosine--tRNA ligase, found in Xanthomonas axonopodis pv. citri (strain 306).